Consider the following 362-residue polypeptide: UDP-N-acetylglucosamine--N-acetylmuramyl-(pentapeptide) pyrophosphoryl-undecaprenol N-acetylglucosamine transferase (362 aa).

Residues 14–16 (TGG), Arg170, Ser199, and Gln289 contribute to the UDP-N-acetyl-alpha-D-glucosamine site.

The protein belongs to the glycosyltransferase 28 family. MurG subfamily.

The protein resides in the cell inner membrane. It carries out the reaction di-trans,octa-cis-undecaprenyl diphospho-N-acetyl-alpha-D-muramoyl-L-alanyl-D-glutamyl-meso-2,6-diaminopimeloyl-D-alanyl-D-alanine + UDP-N-acetyl-alpha-D-glucosamine = di-trans,octa-cis-undecaprenyl diphospho-[N-acetyl-alpha-D-glucosaminyl-(1-&gt;4)]-N-acetyl-alpha-D-muramoyl-L-alanyl-D-glutamyl-meso-2,6-diaminopimeloyl-D-alanyl-D-alanine + UDP + H(+). Its pathway is cell wall biogenesis; peptidoglycan biosynthesis. Its function is as follows. Cell wall formation. Catalyzes the transfer of a GlcNAc subunit on undecaprenyl-pyrophosphoryl-MurNAc-pentapeptide (lipid intermediate I) to form undecaprenyl-pyrophosphoryl-MurNAc-(pentapeptide)GlcNAc (lipid intermediate II). The protein is UDP-N-acetylglucosamine--N-acetylmuramyl-(pentapeptide) pyrophosphoryl-undecaprenol N-acetylglucosamine transferase of Borrelia hermsii (strain HS1 / DAH).